Here is a 206-residue protein sequence, read N- to C-terminus: Large ribosomal subunit protein uL4 (206 aa).

Belongs to the universal ribosomal protein uL4 family. In terms of assembly, part of the 50S ribosomal subunit.

One of the primary rRNA binding proteins, this protein initially binds near the 5'-end of the 23S rRNA. It is important during the early stages of 50S assembly. It makes multiple contacts with different domains of the 23S rRNA in the assembled 50S subunit and ribosome. Functionally, forms part of the polypeptide exit tunnel. In Bradyrhizobium sp. (strain BTAi1 / ATCC BAA-1182), this protein is Large ribosomal subunit protein uL4.